The sequence spans 155 residues: DNA-binding protein inhibitor ID-1 (155 aa).

The bHLH domain maps to 53-105 (LPALLDEQQVNVLLYDMNGCYSRLKELVPTLPQNRKVSKVEILQHVIDYIRDL). The Nuclear export signal signature appears at 98-111 (VIDYIRDLQLELNS).

In terms of assembly, heterodimer with other HLH proteins. Interacts with COPS5, IFI204, GATA4 and NKX2-5. Interacts with CLOCK and BMAL1.

The protein localises to the cytoplasm. The protein resides in the nucleus. Transcriptional regulator (lacking a basic DNA binding domain) which negatively regulates the basic helix-loop-helix (bHLH) transcription factors by forming heterodimers and inhibiting their DNA binding and transcriptional activity. Implicated in regulating a variety of cellular processes, including cellular growth, senescence, differentiation, apoptosis, angiogenesis, and neoplastic transformation. Inhibits skeletal muscle and cardiac myocyte differentiation. Regulates the circadian clock by repressing the transcriptional activator activity of the CLOCK-BMAL1 heterodimer. The polypeptide is DNA-binding protein inhibitor ID-1 (ID1) (Homo sapiens (Human)).